Reading from the N-terminus, the 311-residue chain is Ribosomal protein L11 methyltransferase (311 aa).

S-adenosyl-L-methionine-binding residues include threonine 163, glycine 184, aspartate 206, and asparagine 248.

It belongs to the methyltransferase superfamily. PrmA family.

Its subcellular location is the cytoplasm. It carries out the reaction L-lysyl-[protein] + 3 S-adenosyl-L-methionine = N(6),N(6),N(6)-trimethyl-L-lysyl-[protein] + 3 S-adenosyl-L-homocysteine + 3 H(+). In terms of biological role, methylates ribosomal protein L11. The protein is Ribosomal protein L11 methyltransferase of Clostridium acetobutylicum (strain ATCC 824 / DSM 792 / JCM 1419 / IAM 19013 / LMG 5710 / NBRC 13948 / NRRL B-527 / VKM B-1787 / 2291 / W).